A 92-amino-acid chain; its full sequence is Small ribosomal subunit protein uS17 (92 aa).

Belongs to the universal ribosomal protein uS17 family. In terms of assembly, part of the 30S ribosomal subunit.

Its function is as follows. One of the primary rRNA binding proteins, it binds specifically to the 5'-end of 16S ribosomal RNA. This is Small ribosomal subunit protein uS17 from Corynebacterium urealyticum (strain ATCC 43042 / DSM 7109).